The chain runs to 141 residues: Nucleoside diphosphate kinase (141 aa).

Residues Lys-11, Phe-59, Arg-87, Thr-93, Arg-104, and Asn-114 each coordinate ATP. Catalysis depends on His-117, which acts as the Pros-phosphohistidine intermediate.

It belongs to the NDK family. As to quaternary structure, homotetramer. Requires Mg(2+) as cofactor.

The protein resides in the cytoplasm. It carries out the reaction a 2'-deoxyribonucleoside 5'-diphosphate + ATP = a 2'-deoxyribonucleoside 5'-triphosphate + ADP. The catalysed reaction is a ribonucleoside 5'-diphosphate + ATP = a ribonucleoside 5'-triphosphate + ADP. Its function is as follows. Major role in the synthesis of nucleoside triphosphates other than ATP. The ATP gamma phosphate is transferred to the NDP beta phosphate via a ping-pong mechanism, using a phosphorylated active-site intermediate. The sequence is that of Nucleoside diphosphate kinase from Bdellovibrio bacteriovorus (strain ATCC 15356 / DSM 50701 / NCIMB 9529 / HD100).